The sequence spans 540 residues: Beta-secretase (540 aa).

An N-terminal signal peptide occupies residues 1–31 (MHFSLPTSRIVVVVPAAAICIVCVLIETCTA). The region spanning 81–435 (YYIEVDIGTP…DRENKRVGFA (355 aa)) is the Peptidase A1 domain. Residues Asp-99 and Asp-302 contribute to the active site. Disulfide bonds link Cys-222/Cys-439, Cys-291/Cys-469, and Cys-345/Cys-397. A helical membrane pass occupies residues 483–503 (ITAYVLAAICLVCLIPVIVFA). At 504–540 (LTHQINKRCKGRRGRGVVNHHRLDQEGLAENEPNSDP) the chain is on the cytoplasmic side.

This sequence belongs to the peptidase A1 family.

Its subcellular location is the membrane. The sequence is that of Beta-secretase from Strongylocentrotus purpuratus (Purple sea urchin).